We begin with the raw amino-acid sequence, 525 residues long: Chromosomal replication initiator protein DnaA (525 aa).

The segment at 1 to 71 (MNDFWQHCSA…SDLAREFWNT (71 aa)) is domain I, interacts with DnaA modulators. The tract at residues 71–188 (TPIEVQFVLD…GEADSMYERS (118 aa)) is domain II. Residues 160–182 (AAAGRRTWRPGPGAAPANGGEAD) form a disordered region. Positions 169-181 (PGPGAAPANGGEA) are enriched in low complexity. A domain III, AAA+ region region spans residues 189-405 (KLNPVLTFDN…GALRKILAYS (217 aa)). ATP-binding residues include G233, G235, K236, and T237. The segment at 406–525 (KFHGREISIE…LHVLEQTLKG (120 aa)) is domain IV, binds dsDNA.

It belongs to the DnaA family. Oligomerizes as a right-handed, spiral filament on DNA at oriC.

It is found in the cytoplasm. Plays an essential role in the initiation and regulation of chromosomal replication. ATP-DnaA binds to the origin of replication (oriC) to initiate formation of the DNA replication initiation complex once per cell cycle. Binds the DnaA box (a 9 base pair repeat at the origin) and separates the double-stranded (ds)DNA. Forms a right-handed helical filament on oriC DNA; dsDNA binds to the exterior of the filament while single-stranded (ss)DNA is stabiized in the filament's interior. The ATP-DnaA-oriC complex binds and stabilizes one strand of the AT-rich DNA unwinding element (DUE), permitting loading of DNA polymerase. After initiation quickly degrades to an ADP-DnaA complex that is not apt for DNA replication. Binds acidic phospholipids. The chain is Chromosomal replication initiator protein DnaA from Burkholderia orbicola (strain MC0-3).